Consider the following 364-residue polypeptide: Adenosine 3'-phospho 5'-phosphosulfate transporter 2 (364 aa).

The next 10 helical transmembrane spans lie at 39–59 (WLQF…YGYM), 74–94 (WTLT…ECII), 106–126 (IYGV…ASVG), 131–151 (PTQV…GILI), 157–177 (GWID…FTLA), 187–206 (SRGY…IGNI), 231–251 (VFIF…PFFL), 257–277 (TFGY…VVLT), 281–301 (VFGA…TIIL), and 310–330 (FTIE…LNLY).

It belongs to the nucleotide-sugar transporter family. SLC35B subfamily.

The protein localises to the golgi apparatus membrane. Functionally, mediates the transport of adenosine 3'-phospho 5'-phosphosulfate (PAPS), from cytosol into Golgi. PAPS is a universal sulfuryl donor for sulfation events that take place in the Golgi. The protein is Adenosine 3'-phospho 5'-phosphosulfate transporter 2 (pst-2) of Caenorhabditis elegans.